The primary structure comprises 288 residues: Pyridoxal kinase PdxY (288 aa).

Substrate-binding positions include Ser12 and 47–48 (TQ). ATP is bound by residues Asp114, Glu151, Lys184, and 211-214 (RPLL). A substrate-binding site is contributed by Asp225.

This sequence belongs to the pyridoxine kinase family. PdxY subfamily. In terms of assembly, homodimer. Mg(2+) serves as cofactor.

The enzyme catalyses pyridoxal + ATP = pyridoxal 5'-phosphate + ADP + H(+). It participates in cofactor metabolism; pyridoxal 5'-phosphate salvage; pyridoxal 5'-phosphate from pyridoxal: step 1/1. Pyridoxal kinase involved in the salvage pathway of pyridoxal 5'-phosphate (PLP). Catalyzes the phosphorylation of pyridoxal to PLP. This is Pyridoxal kinase PdxY from Pseudomonas aeruginosa (strain UCBPP-PA14).